The sequence spans 257 residues: GTP cyclohydrolase FolE2 (257 aa).

It belongs to the GTP cyclohydrolase IV family.

It catalyses the reaction GTP + H2O = 7,8-dihydroneopterin 3'-triphosphate + formate + H(+). Its pathway is cofactor biosynthesis; 7,8-dihydroneopterin triphosphate biosynthesis; 7,8-dihydroneopterin triphosphate from GTP: step 1/1. Functionally, converts GTP to 7,8-dihydroneopterin triphosphate. The protein is GTP cyclohydrolase FolE2 of Syntrophobacter fumaroxidans (strain DSM 10017 / MPOB).